We begin with the raw amino-acid sequence, 461 residues long: Argininosuccinate lyase (461 aa).

Belongs to the lyase 1 family. Argininosuccinate lyase subfamily.

The protein localises to the cytoplasm. It carries out the reaction 2-(N(omega)-L-arginino)succinate = fumarate + L-arginine. The protein operates within amino-acid biosynthesis; L-arginine biosynthesis; L-arginine from L-ornithine and carbamoyl phosphate: step 3/3. With respect to regulation, strongly inhibited by L-arginine. Inhibitory effects are lowered at pH 7.0 compared to those at pH 8.0. At 42 degrees Celsius and pH 8.0, activity decreases to 77% and 25% in the presence of 1 mM and 10 mM arginine, respectively. The other amino and organic acids do not affect activity. Catalyzes the last step of arginine biosynthesis, the conversion of argininosuccinate into L-arginine and fumarate. The chain is Argininosuccinate lyase from Nostoc sp. (strain PCC 7120 / SAG 25.82 / UTEX 2576).